We begin with the raw amino-acid sequence, 204 residues long: Holliday junction branch migration complex subunit RuvA (204 aa).

The segment at 1–64 (MIGRLQGILL…EDAHLLFGFA (64 aa)) is domain I. The segment at 65-143 (QKTDRTLFRE…GVKQSDFFVE (79 aa)) is domain II. The segment at 144 to 155 (STHIPLSPSIES) is flexible linker. Residues 156-204 (HSESSSDEAISALIALGYKPVEAEKMVKRVAKPELTSEQVIREALKAAL) are domain III.

It belongs to the RuvA family. In terms of assembly, homotetramer. Forms an RuvA(8)-RuvB(12)-Holliday junction (HJ) complex. HJ DNA is sandwiched between 2 RuvA tetramers; dsDNA enters through RuvA and exits via RuvB. An RuvB hexamer assembles on each DNA strand where it exits the tetramer. Each RuvB hexamer is contacted by two RuvA subunits (via domain III) on 2 adjacent RuvB subunits; this complex drives branch migration. In the full resolvosome a probable DNA-RuvA(4)-RuvB(12)-RuvC(2) complex forms which resolves the HJ.

The protein resides in the cytoplasm. Functionally, the RuvA-RuvB-RuvC complex processes Holliday junction (HJ) DNA during genetic recombination and DNA repair, while the RuvA-RuvB complex plays an important role in the rescue of blocked DNA replication forks via replication fork reversal (RFR). RuvA specifically binds to HJ cruciform DNA, conferring on it an open structure. The RuvB hexamer acts as an ATP-dependent pump, pulling dsDNA into and through the RuvAB complex. HJ branch migration allows RuvC to scan DNA until it finds its consensus sequence, where it cleaves and resolves the cruciform DNA. The chain is Holliday junction branch migration complex subunit RuvA from Haemophilus influenzae (strain PittEE).